A 423-amino-acid polypeptide reads, in one-letter code: Glutamate-1-semialdehyde 2,1-aminomutase (423 aa).

The residue at position 258 (Lys-258) is an N6-(pyridoxal phosphate)lysine.

This sequence belongs to the class-III pyridoxal-phosphate-dependent aminotransferase family. HemL subfamily. Requires pyridoxal 5'-phosphate as cofactor.

It is found in the cytoplasm. It carries out the reaction (S)-4-amino-5-oxopentanoate = 5-aminolevulinate. Its pathway is porphyrin-containing compound metabolism; protoporphyrin-IX biosynthesis; 5-aminolevulinate from L-glutamyl-tRNA(Glu): step 2/2. This chain is Glutamate-1-semialdehyde 2,1-aminomutase, found in Pyrobaculum aerophilum (strain ATCC 51768 / DSM 7523 / JCM 9630 / CIP 104966 / NBRC 100827 / IM2).